A 381-amino-acid polypeptide reads, in one-letter code: Homoserine O-succinyltransferase (381 aa).

The AB hydrolase-1 domain maps to 45–360; sequence NAVLVCHALN…PHGHDAFLLD (316 aa). Catalysis depends on Ser-151, which acts as the Nucleophile. Residue Arg-221 participates in substrate binding. Residues Asp-321 and His-354 contribute to the active site. Residue Asp-355 participates in substrate binding.

The protein belongs to the AB hydrolase superfamily. MetX family. In terms of assembly, homodimer.

It localises to the cytoplasm. The enzyme catalyses L-homoserine + succinyl-CoA = O-succinyl-L-homoserine + CoA. The protein operates within amino-acid biosynthesis; L-methionine biosynthesis via de novo pathway; O-succinyl-L-homoserine from L-homoserine: step 1/1. In terms of biological role, transfers a succinyl group from succinyl-CoA to L-homoserine, forming succinyl-L-homoserine. The sequence is that of Homoserine O-succinyltransferase from Paraburkholderia phytofirmans (strain DSM 17436 / LMG 22146 / PsJN) (Burkholderia phytofirmans).